The following is a 235-amino-acid chain: Fibrillarin-like rRNA/tRNA 2'-O-methyltransferase (235 aa).

Residues 91–92, 110–111, 137–138, and 157–160 each bind S-adenosyl-L-methionine; these read TT, EF, DA, and DVAQ.

The protein belongs to the methyltransferase superfamily. Fibrillarin family. Interacts with nop5. Component of box C/D small ribonucleoprotein (sRNP) particles that contain rpl7ae, FlpA and nop5, plus a guide RNA.

Functionally, involved in pre-rRNA and tRNA processing. Utilizes the methyl donor S-adenosyl-L-methionine to catalyze the site-specific 2'-hydroxyl methylation of ribose moieties in rRNA and tRNA. Site specificity is provided by a guide RNA that base pairs with the substrate. Methylation occurs at a characteristic distance from the sequence involved in base pairing with the guide RNA. The polypeptide is Fibrillarin-like rRNA/tRNA 2'-O-methyltransferase (Pyrobaculum neutrophilum (strain DSM 2338 / JCM 9278 / NBRC 100436 / V24Sta) (Thermoproteus neutrophilus)).